We begin with the raw amino-acid sequence, 149 residues long: Small ribosomal subunit protein uS13 (149 aa).

The protein belongs to the universal ribosomal protein uS13 family. Part of the 30S ribosomal subunit. Forms a loose heterodimer with protein S19. Forms two bridges to the 50S subunit in the 70S ribosome.

Functionally, located at the top of the head of the 30S subunit, it contacts several helices of the 16S rRNA. In the 70S ribosome it contacts the 23S rRNA (bridge B1a) and protein L5 of the 50S subunit (bridge B1b), connecting the 2 subunits; these bridges are implicated in subunit movement. This is Small ribosomal subunit protein uS13 from Methanococcus maripaludis (strain DSM 14266 / JCM 13030 / NBRC 101832 / S2 / LL).